The sequence spans 293 residues: 4-diphosphocytidyl-2-C-methyl-D-erythritol kinase (293 aa).

The active site involves K16. Position 99–109 (99–109 (PMGAGLGGGSS)) interacts with ATP. D141 is a catalytic residue.

It belongs to the GHMP kinase family. IspE subfamily.

The catalysed reaction is 4-CDP-2-C-methyl-D-erythritol + ATP = 4-CDP-2-C-methyl-D-erythritol 2-phosphate + ADP + H(+). It functions in the pathway isoprenoid biosynthesis; isopentenyl diphosphate biosynthesis via DXP pathway; isopentenyl diphosphate from 1-deoxy-D-xylulose 5-phosphate: step 3/6. Functionally, catalyzes the phosphorylation of the position 2 hydroxy group of 4-diphosphocytidyl-2C-methyl-D-erythritol. In Burkholderia lata (strain ATCC 17760 / DSM 23089 / LMG 22485 / NCIMB 9086 / R18194 / 383), this protein is 4-diphosphocytidyl-2-C-methyl-D-erythritol kinase.